The chain runs to 127 residues: Large-conductance mechanosensitive channel (127 aa).

3 helical membrane passes run 9–29 (EFAM…GVAF), 32–52 (IVTA…LGGV), and 75–95 (VIDF…INLL).

This sequence belongs to the MscL family. Homopentamer.

It is found in the cell inner membrane. Its function is as follows. Channel that opens in response to stretch forces in the membrane lipid bilayer. May participate in the regulation of osmotic pressure changes within the cell. The chain is Large-conductance mechanosensitive channel from Legionella pneumophila (strain Corby).